The following is a 177-amino-acid chain: Large ribosomal subunit protein bL19 (177 aa).

This sequence belongs to the bacterial ribosomal protein bL19 family.

This protein is located at the 30S-50S ribosomal subunit interface and may play a role in the structure and function of the aminoacyl-tRNA binding site. This Sinorhizobium medicae (strain WSM419) (Ensifer medicae) protein is Large ribosomal subunit protein bL19.